The primary structure comprises 269 residues: Thymidylate synthase (269 aa).

Residue R26 coordinates dUMP. H56 is a binding site for (6R)-5,10-methylene-5,6,7,8-tetrahydrofolate. 131 to 132 provides a ligand contact to dUMP; the sequence is RR. C151 (nucleophile) is an active-site residue. DUMP contacts are provided by residues 171–174, N182, and 212–214; these read RSAD and HIY. D174 contributes to the (6R)-5,10-methylene-5,6,7,8-tetrahydrofolate binding site. A268 contributes to the (6R)-5,10-methylene-5,6,7,8-tetrahydrofolate binding site.

This sequence belongs to the thymidylate synthase family. Bacterial-type ThyA subfamily. As to quaternary structure, homodimer.

The protein localises to the cytoplasm. The enzyme catalyses dUMP + (6R)-5,10-methylene-5,6,7,8-tetrahydrofolate = 7,8-dihydrofolate + dTMP. The protein operates within pyrimidine metabolism; dTTP biosynthesis. Catalyzes the reductive methylation of 2'-deoxyuridine-5'-monophosphate (dUMP) to 2'-deoxythymidine-5'-monophosphate (dTMP) while utilizing 5,10-methylenetetrahydrofolate (mTHF) as the methyl donor and reductant in the reaction, yielding dihydrofolate (DHF) as a by-product. This enzymatic reaction provides an intracellular de novo source of dTMP, an essential precursor for DNA biosynthesis. This Leifsonia xyli subsp. xyli (strain CTCB07) protein is Thymidylate synthase.